The primary structure comprises 336 residues: Protein phosphatase 1 regulatory subunit pprA (336 aa).

The segment covering 1-10 (MSEQNTIINS) has biased composition (low complexity). Residues 1–24 (MSEQNTIINSEEIKENEKIESETE) form a disordered region. Residues 11 to 21 (EEIKENEKIES) are compositionally biased toward basic and acidic residues. LRR repeat units follow at residues 26–47 (PITYLDLTGQPHTSIGDSYNIP), 49–70 (TLLDLDLTNCKITKIENINHLK), 71–92 (NLKKLCFRQNLIEKIENIDQLK), 93–114 (ELESLDLYDNKLQVIENIKDFQ), 115–136 (SLTYLDLSFNEIRIVENLSIKD), 139–160 (KIKELYLANNKITKIENLQELV), 161–182 (PIKNLELGSNRLREIENLENLV), 183–204 (NIETLWLGRNKITEIKGINHLS), 205–225 (HLRILSLQSNRLTEIGVKGLV), 229–250 (CLEELYLSHNGITDIDGLQSLK), 251–272 (QLRTLDISANKIKTLVGLNELP), and 273–294 (DLDEIWCNDNLVDSMDNIEQQV). In terms of domain architecture, LRRCT spans 306–336 (NPVATHVQYRRMFINMFPQLKQLDATMVKRN).

The protein belongs to the SDS22 family.

Its subcellular location is the nucleus. Its function is as follows. Regulatory subunit of protein phosphatase 1. The polypeptide is Protein phosphatase 1 regulatory subunit pprA (pprA) (Dictyostelium discoideum (Social amoeba)).